A 72-amino-acid chain; its full sequence is Tetrahydromethanopterin S-methyltransferase subunit G (72 aa).

The chain crosses the membrane as a helical span at residues 48 to 68 (IGILYGGFIGLLLFLIYTVVS).

It belongs to the MtrG family. As to quaternary structure, the complex is composed of 8 subunits; MtrA, MtrB, MtrC, MtrD, MtrE, MtrF, MtrG and MtrH.

The protein resides in the cell membrane. It carries out the reaction 5-methyl-5,6,7,8-tetrahydromethanopterin + coenzyme M + 2 Na(+)(in) = 5,6,7,8-tetrahydromethanopterin + methyl-coenzyme M + 2 Na(+)(out). It functions in the pathway one-carbon metabolism; methanogenesis from CO(2); methyl-coenzyme M from 5,10-methylene-5,6,7,8-tetrahydromethanopterin: step 2/2. Its function is as follows. Part of a complex that catalyzes the formation of methyl-coenzyme M and tetrahydromethanopterin from coenzyme M and methyl-tetrahydromethanopterin. This is an energy-conserving, sodium-ion translocating step. This Methanosarcina barkeri (strain Fusaro / DSM 804) protein is Tetrahydromethanopterin S-methyltransferase subunit G.